Reading from the N-terminus, the 257-residue chain is Tryptophan synthase alpha chain (257 aa).

Residues Glu44 and Asp55 each act as proton acceptor in the active site.

It belongs to the TrpA family. Tetramer of two alpha and two beta chains.

It catalyses the reaction (1S,2R)-1-C-(indol-3-yl)glycerol 3-phosphate + L-serine = D-glyceraldehyde 3-phosphate + L-tryptophan + H2O. It functions in the pathway amino-acid biosynthesis; L-tryptophan biosynthesis; L-tryptophan from chorismate: step 5/5. The alpha subunit is responsible for the aldol cleavage of indoleglycerol phosphate to indole and glyceraldehyde 3-phosphate. The protein is Tryptophan synthase alpha chain of Chlamydia caviae (strain ATCC VR-813 / DSM 19441 / 03DC25 / GPIC) (Chlamydophila caviae).